Reading from the N-terminus, the 167-residue chain is Leptin (167 aa).

A signal peptide spans 1–21; that stretch reads MRCGPLYQFLWLWPYLSYVEA. C117 and C167 are oxidised to a cystine.

This sequence belongs to the leptin family.

It is found in the secreted. Functionally, key player in the regulation of energy balance and body weight control. Once released into the circulation, has central and peripheral effects by binding LEPR, found in many tissues, which results in the activation of several major signaling pathways. In the hypothalamus, acts as an appetite-regulating factor that induces a decrease in food intake and an increase in energy consumption by inducing anorexinogenic factors and suppressing orexigenic neuropeptides, also regulates bone mass and secretion of hypothalamo-pituitary-adrenal hormones. In the periphery, increases basal metabolism, influences reproductive function, regulates pancreatic beta-cell function and insulin secretion, is pro-angiogenic for endothelial cell and affects innate and adaptive immunity. In the arcuate nucleus of the hypothalamus, activates by depolarization POMC neurons inducing FOS and SOCS3 expression to release anorexigenic peptides and inhibits by hyperpolarization NPY neurons inducing SOCS3 with a consequent reduction on release of orexigenic peptides. In addition to its known satiety inducing effect, has a modulatory role in nutrient absorption. In the intestine, reduces glucose absorption by enterocytes by activating PKC and leading to a sequential activation of p38, PI3K and ERK signaling pathways which exerts an inhibitory effect on glucose absorption. Acts as a growth factor on certain tissues, through the activation of different signaling pathways increases expression of genes involved in cell cycle regulation such as CCND1, via JAK2-STAT3 pathway, or VEGFA, via MAPK1/3 and PI3K-AKT1 pathways. May also play an apoptotic role via JAK2-STAT3 pathway and up-regulation of BIRC5 expression. Pro-angiogenic, has mitogenic activity on vascular endothelial cells and plays a role in matrix remodeling by regulating the expression of matrix metalloproteinases (MMPs) and tissue inhibitors of metalloproteinases (TIMPs). In innate immunity, modulates the activity and function of neutrophils by increasing chemotaxis and the secretion of oxygen radicals. Increases phagocytosis by macrophages and enhances secretion of pro-inflammatory mediators. Increases cytotoxic ability of NK cells. Plays a pro-inflammatory role, in synergy with IL1B, by inducing NOS2 which promotes the production of IL6, IL8 and Prostaglandin E2, through a signaling pathway that involves JAK2, PI3K, MAP2K1/MEK1 and MAPK14/p38. In adaptive immunity, promotes the switch of memory T-cells towards T helper-1 cell immune responses. Increases CD4(+)CD25(-) T-cell proliferation and reduces autophagy during TCR (T-cell receptor) stimulation, through MTOR signaling pathway activation and BCL2 up-regulation. In Bubalus bubalis (Domestic water buffalo), this protein is Leptin (LEP).